A 405-amino-acid chain; its full sequence is Low-salt glycan biosynthesis sulfotransferase Agl7 (405 aa).

3 residues coordinate Ca(2+): D24, D201, and H202.

This sequence belongs to the sulfatase family. The cofactor is Ca(2+).

Its pathway is protein modification; protein glycosylation. It participates in cell surface structure biogenesis; S-layer biogenesis. In terms of biological role, involved in N-glycan biosynthetic pathway that takes place under low-salt conditions (1.75 M instead of 3.4 M). Participates in the formation of the tetrasaccharide present at 'Asn-532' of S-layer glycoprotein Csg, consisting of a sulfated hexose, 2 hexoses and rhamnose. Mediates sulfation of sugar 1 in the tetrasaccharide. The sequence is that of Low-salt glycan biosynthesis sulfotransferase Agl7 from Haloferax volcanii (strain ATCC 29605 / DSM 3757 / JCM 8879 / NBRC 14742 / NCIMB 2012 / VKM B-1768 / DS2) (Halobacterium volcanii).